The sequence spans 141 residues: Large ribosomal subunit protein uL11 (141 aa).

The protein belongs to the universal ribosomal protein uL11 family. Part of the ribosomal stalk of the 50S ribosomal subunit. Interacts with L10 and the large rRNA to form the base of the stalk. L10 forms an elongated spine to which L12 dimers bind in a sequential fashion forming a multimeric L10(L12)X complex. One or more lysine residues are methylated.

Functionally, forms part of the ribosomal stalk which helps the ribosome interact with GTP-bound translation factors. In Oceanobacillus iheyensis (strain DSM 14371 / CIP 107618 / JCM 11309 / KCTC 3954 / HTE831), this protein is Large ribosomal subunit protein uL11.